Consider the following 89-residue polypeptide: Small ribosomal subunit protein uS14A (89 aa).

This sequence belongs to the universal ribosomal protein uS14 family. In terms of assembly, part of the 30S ribosomal subunit. Contacts proteins S3 and S10.

Its function is as follows. Binds 16S rRNA, required for the assembly of 30S particles and may also be responsible for determining the conformation of the 16S rRNA at the A site. This is Small ribosomal subunit protein uS14A from Levilactobacillus brevis (strain ATCC 367 / BCRC 12310 / CIP 105137 / JCM 1170 / LMG 11437 / NCIMB 947 / NCTC 947) (Lactobacillus brevis).